The following is a 7913-amino-acid chain: MPSRILPGKHMPAQGHQRREADYWQNALADCKCATFPAIPETVEQCLPDALVEHRFAKLQQNGAATSMSNVARAAWALVVARITNSDDVVFGAVVFGTTRDSNMTIVPVRIETAMDLTIAAYLGMVQQQEEDMTPFEQTGLSSIMQTCPGAQQACQFQSLLAVHSHESNGERLDDQRYALVLEIRPEEDQFSALARFDSRVMDHKTVERLLERFELVMTELCRGGPKMRVQDIHMAGKHDEEEIWKWNATVPEAVERCPHHIFEQRSRAHPNKLAVHAWDGVLTYGELDRLSGTLAGRLLDLGVGPDDLVPLCFEKSMYTVVAMVAVLKAGAGFVLLDPALPEQRLQIIVDQIQAKIMVSSVSTYEMSSRMASEVVAISSGFFSEVEPRPCTQSHPPSPSSVMYVVYTSGSTGTPKGAAITHQNHATALYYQAERLGLTDQSRIYDFSSYSFDISIFNAFSALTLGGCLCVPSDYERQDKLAESITSYNADFIYLTPTVARQLSPQKTPTLQTIAFIGEALHPKDVGIWWDKVRVVNAYGPSECTTASTLRTSPSTPEEACSIGKGAGMVTWIVDPNNHNVLLPPGSIGELLLEGPLIGRGYLGDAKKNAAAFIKDPAWLIKGASGSKGRSGRLYKTGDLVQYLADGNLKFIGRNDNQVKIRGNRVELGEVEHALRDCVETRSVVAEIIIPRGSKSSATLAAFLEAEEEEEDDTESEVTARMLPVPAEIKDKMAQRLPIYMVPTVLFSMKRLPMTASGKIHRKQLRDIGGRFSARQMVEMHTKGRAKRQPLSEVEKQVHRIWSQVLGIDASMIGLDDSFFELGGDSLGAMEVVSEARKVGLELTVVDIFKHRSVENVAGQARRTTNGSLEALSPFSLISKDTDVASLIQDMAMDYELDGASIQDAFPCTSLQEGLVSLTSKSPGDYVMQGILELAPDIDVDAFRNAWEQVATAGQILRTRILQSRHHGTLQIVVDESVSWVEATDLDSYLAEDKKKPMEIGQPLVRYALIKDDNAATRWFVWTIHHSLFDEWSLTLIIDAVTRVYQGKSITMPHFQPFIKYVEKQRDEKMANYWRQSLADCECPSFPALPPSLEQPVTDGVMEHALHHPQHDSSVTASTIIRAAWALITSRMTNSDDVVFGATLSGRGAAVPGVEAIAAPTITTVPVRIRLSREQKVADYLKTVQELATDMIPFEQMGLQHIAKLSPGARQACNFQTLLVIQPHDSSKTQEVLGKWHLSNQQQSFNTYSLILEIQLGETMAARASYDSRVIKPWLVERLLERLDFLMDQLDNAEPDQAVAEVDTVSGKDIEQLWNWNRTVPTTSELCIHHVLETQAHSRPDSPALCAWDGQVTYRELNHLAAQLATHLVKRGVGPEVLVPLYFEKSMWTNVAMLGVLKAGGGFVLLDPSLPEQRLQEMIRQTKAKLLVSSRSNQSASLRLVPEVVTLGSKFFAELASEPDMNGTKGHKETIGQATPFSTAYVLFTSGSTGTPKGVVITHSNVTSAVPEHVRCLGYTAASRIYDFASYSFGASLNNAFAALMAGGCLCIPSDEDRRSNLAASLTALKGTSILLTPSVAESLSPDSVSGLKTLIFGGEAVRHKDVKPWWGKAKVLTAYGSSEVTTVATVNTQASNMDEAAEIGTGAGGVTWVVDPDDHHKLLPPGCIGELLLEGPLVGSGYLGDAIKSAEVFIKNPPAWLLEGASGHQGRRGVLYKTGDLVRYNENGNLSYIGRKDAQVKIRGQRVELGEVEFRVQQCFPEAKQVAAEVVVPCGKKSSPTLAAFLVLDDAQQASSSFQTLPVDTDRMEQLAKQLPSYMVPVLFLAIKEMPMTASGKMNRRRLRELGGTVTAQQLADLGTSGQVAKRQPRTKLERQLQALWARVLNIDASAIGLDDSFYRLGGDSISAMQVSHGARAFHVHIGVVDILRQRTISNLAQATGTQGSTNGATLINAHAPDQPVTRVDNGPAQLSPIQRLYFVLQNDPTACFDQFFYLGLRRTTSHQLVSAALETIVRRHGVLRARFRQNDHGGWEQRISDDVDASLLFRVESGVSGTAEAIAKSRAALSITEGPIFSAVLFDKPDHQTLFLTIHHLVIDLVSWRVLMQELEDIITNGPLTAPPSMDFPTWSAMQAQYAKESLHANAPDLPESQTNMAYWGMESNPNLKSGAIVEHFTMDEPTSSLILGRCNDALGTRPLELMIAALAYSFSRIFSDCALPAVFSEGHGREVWHDSLDITTTLGWFSTIFPVRVSPGANGLIDFIRETKDCIRSLSRNGWSYFTSRFADESNASRFGTDFPVEVMFNYAGFYRNLERQDGLFEQLSVPENCDPPSCRDVRRFALFDFDVQVVRGCIVGEVEFHKDMHHRDDIMRWIGEYQSTLRQMATDLPRISPGWTLSDFPNVFNTYGDIQEFRNQTLVQLGVEPLDVEDIFPCAPLQQGIILAQAKEEANYLRWCDIEIELDANQQLDRAKLTDAWKAVVKRHAMLRAVLVDDFPGSSRPMHVVLKDPELGISWGAETMCFPDFNKYGLQHRLQVCSFGERRARLRLHMNHAITDGFSQSLLCKDLQAAYHDQLEAAGSYKDFILHLENQSQEARLEFWSQYLAGVEPTLFPTSDCTIPSKVEQVAVPNLDSESIRAFCAKWDVTAATIMKLAWGLVLGMYAATPAPCFGNLYSGRDIPVEGIDSIFGPLIGMIPCCIHLNGSKGVLDTLKEVQTDYLSTIPYQHSPLAEVHRAAGLLGSRQLFNTLLSYQKNTDETRGNEGGLTVRVADSYDLTEYDVTIDVVDGTAEIEVLIDFRAGCLSTNDAARLAACFSAAVSDIVANPLKPTKDLCLLGRRDLDIIWGWNSTVPAADERFVHDLIRERSLAQPHEPAICAWDGELSYKELDDLSTRLAGHLHQVGVQPGALVPLCFEKSLYTSVAMLAVVKMGAAFVLLDPSLPEQRLQSMTQQVGSNLILSSASNRHLCARLCKTVVQVSADFIPTTTSSIPRPKTEPHSTAMFAVFTSGSTGTPKGIVLTHTNFTTALMHQAEALGFKETSRVFDFASYAFDLAVHNAFATYVTGGCLCVPSDEDRRGNPASVMKAMRATVVELTPSVSRLIDPATLPDLETIIMGGEALSVDDVNRWWGKARIVNIYGPAETHISTVNADAPSPEEATLLGKGSGLVTWIVDPENRNRLMPPGCIGELALEGPLVGQGYLNDAQKTAASFVDDPAWLLQGSPGHSGRHGRVYFSGDLVRYQDHGSLAFVARKDAQIKIRGQRVELGEVEHCVQQCLPEAIRVVVDVITPQGTSTPMLSAFLQMDKAIEVESPAVEVVRIPTDTKNMLSQRLPGYMVPAVFFYMRRLPQTPSGKTDRIQLRQVGGSFSIQQLATIQTNGQGPKRQPLSEAERKMQHIWAQVLNIDMASIGLDDNFFELGGDSISVMKLVAQARKEGLVLTVAAIFRQPTLANVTHQAVAQLEKGPQDLSPFSLLGEGLDVKAFAEAAMKQHQIPTSVTILDAFPCTPLQEGLLSLSMKRSGNYVLQAKLELSSNIDISRFRNAWEEVVRSLPILRTRIIEHDSLGLLQAVTDENISWIETSGLDDYLEADRQQTMGVGQPLARYALVGESDARWFVWTVHHVLYDGWSEPLIIKAVNKAYQGSSLDLGPSFQTFIKYIQDSDTSKMVDYWRQALNDCEAVPFPPPSSSTEVQVADASVEQPLPRPRNKKFTASTVIRAAWALVAGGATDSGDVCFGVTVSGRNAPVPDIERMVGPTFATLPLRVRLSKNQAIADYLETIQQQATDMIPFEQMGLHRIAKISPGSQQACNFQTLLVIQPQEEDAGENVLGEWHDGDQHQWFNTHGLTILVQISASDITVKASFNAKVISAWAVQLLLQQLAHVMQQLDNGGVKALATIAMATPQDLEKIWAWNQNVPRPADQCIHELIADRVRIHPNAPAVCAWDGELTYQRLDQLSSDLASRLADLGVGPAVFVALCFEKSMWATVAMLAMVKTGGAFVLLDASLPQQRLKSVVGQVEAAMILTSSTNETLSRQLCENVVIAQDLMTGMQDIVRPLPAPELDSVIYAVFTSGTTGTPKGAIINHRSSASAVLHQIKGFGYTTETRVYDFSTYSFDGCILNAFTVLAAGGCLCVPTDDGRKNNLADSMESLRSNAVFLTPSVAELLSPEQLPSLRSMILGGEAIRVKDIQPWWDAESVKIITIYGPSECTPVSMINPEPTSPENAVRLGWGAGQVTWIVDPEDFNSLTPLGSIGELLLEGPLVGQGYLHEPEKTADAFIMDPVWLLQGVDGRPGRHGRLYKTGDLVRYNQDGSISYIGRKDDQVKLRGQRVELGEVERHVRISMPQAKQAVAEVIVPRSDKSNPALAVFLQIEDSMMINGVSTENPPKAAVLLPSADVLQKLAESLPTYMVPTVFFAMRQLPMGTTGKMDRKELRRIGSSFSAQELAQARTAQQGPKRQPASEAERQMQQVWAKVLGIPPASVGRDDNFFQLGGDSITAMKLVGEARKAGLELVVADMFRYPRLHEAATQAQMLGRNTKVPKMLIDGPAEQSFAQARLWFLEQLYPGLTWYLMPCIMRLTGPLRLDALTAAFIALEDRHETLRTTFSTREGTNLQHIHAVRSRELTVVDMSADQESLPHVLSQDETTPFNLENEPGWRVTLYRVGDDEHILSIVLHHIISDGWSIDILRRELSSFYSAALRGEDPLSNIDPLPIQYKDFSVWQRQQAQVDEHERQLKYWMTELETSHPAEFLCDKPRPPTLSGKADVREVCIDGPVYDKLQEFCRTHGMTPFIVLLAAFRATHYRLTGDGDGVIGSPNANRDRWELKDTIGFFVNMQCLRVKIEDESVTFGELVKLVQSAAISSLANQDVPFERLVSKLRKERDLSRHPLIQLVFAVHSQLDLGKFALEGYEIEYIDQSITTRFDLEFHFFTEEKGLRGQLIFSTDLFHPDTIDNVLEVFRTVLEKGLNEPQTPVAALPLMTDGGYDKLDSMGLIQVKQTAYPRNSSIVDEFRQQVAACADRVAVKDASSQLTYAQLDGLSEHVAQWLMSKSLAPETLIGVFCGRSCQSIIAILGILKANHAYLPFDLKIPASRMEGIISSIGHMLVLTGDGVRVPSFALEVEFVMISEALEHGARMSSIQRNTCPSPSPSSLAYVMFTSGSTGRPKGVMVEHRSVLRLIKDDDLRPHGSGIIAHMSNIAFDAATWEIYGALLNGGTVICIDLLTVLDYAATSRIFAEEKIQAIFITPALLKQYLSNCPTAIGLLDTIYVGGDRLDPQDVFTARSLMRGGKVYNGYGPTENTTFSTTYRLPVKDICVNGVAIGRALSNSGAYVMDTQQCLVPLGVVGELVVTGDGLARGYLDSQRNTGRFINVTIDGKTVRAYRTGDLARCRPSDGQIECLRRMDAQVKIRGQRVELGEIEHVLRNHESVNDAVVTLQQDPQGARLIGFITLDEPDIQHKVQRMEQEVDGDDEKKQVEVWEESFDTDIYAGFDNVKPELIGRDFVGWTSMYDGSEIDKGEMNEWLDDTIDTILNGGQAGHVLELGSGSGMILFNLCNNGMRSYVGLDPSQKAVEFVTRAAKSMPMADKIRMYKGTATDVGHLGLTTEYDLAIVNSVAQYFPSLKYLTKVVERVLQQNAKTFFFGDMRSYAMYKEFTVTRSLYRVGKKPTKDDLRRQMASMEQMEVEFQVDPAFFTALPSLLPDLVEHVEILPKKMQATNELSCYRYAAVVHGKGQGLQIRDAEGPWIDFMKDGLHHESLLKLLQSSTSPTVSVANIPYSKTIFERHVLDMLGDADGDEDWLSSARQKANDCASLCAIDLVQLARSTGYQVEISWARQRSQRGGLDAIFHRHESNGQRVMFRFPIDDAHQSLSSQPLRQQVKQKIREQLRDGMQSQLLPYMIPQAVHILDKMPVNENGKVDRRALTESLQSRATRGPLRQPTSKTQRQLQAIWAQVLNTDANSIGLDDSFFQVGGDSLGAMRLVGDARKIGLNLAVADVFRRPVLRDMAEGLPLAKAMESIPKTEVDGPVEQSFAQRRLWFLEQLYPGLTWYMMPSAIRLRGHLELDALNTAVLALEKRHETLRTTFVSQNDVHLQEVHPFQAKKIRVVSVTEDNLMKALEDDQRTPFDLKTEPGWRVTVFRLDDTNYLLSIIMHHIVSDGWSVDILRAELEKFYSAAIRNQDPLALVESLPIQYRDFSVWQKQQDQLDEHQRQLSYWVKQLETSQPAEFLCDKPRPAALSGEAAVESLRIDGALYQQLRTFCRTQSVTPFVALLSTFRVAHFFLTGSTDATMGTVNANRDRWEVKDMIGFFVNMQCIRIRVEAESFKQLVQQVHATTIASFANQDVPFENIVSQLNRGRDLSRHPLAQLVFALHSQMDLGEFVLEGLDTEMVKVPPTTRFDLEFHFFQEQEAFQGEVLYSTDLFDAQTIRNMLSVFKRVLEAGLGDPNAAITSMSLLSDADYAKLDQMGLVEIDRVDCPDASIVDLFRQQALLNPDKVAVKDSSSQLTYAELDQQSDSTARWLAKRCLAPGTLIGVFSSRCCRTVVALLGILKANLAYLPFDVHTPRARMEKILGSVDGQTLVLVGNNVQVPEGLDVSFVPIAETLHEATSEIHITAPNATSLAYVMFTSGSTGNPKGVMINHRGIVRLVKGSNMASYLPSTPTMAHITNIAFDVSGWEIYGALLNGGMVVCISAMDVLDFRAVPEIFAREKIQAAIFTPALLKQYLIQCPPVIGALTALYVAGDRADSQDLFMAQGLMSGHIINAYGPTENSVISTLYCLQNGERCVNGVPIGKAISNSGAYVMDQQQQLVPLGVVGELVVTGDGLARGYTDPGRDIDRFVTVTIGHKRVKAYRTGDYVRYRTDGQLEFFGRIDGQIKIRGHRVELGEIEHCLRSHDSVHDAIVVLQEGQEAQLAAFVTVNEATEDAGQEEDVTDIVNVWGELFDADTYSTIQDVKPETIGRDFTGWVSTYTGQDIDKQEMNEWLDDTMATINAYEPRNVLEIGTGTGMILFNLKGVQSYVGLEPSEKAVEFTVRAAKSMSMLRDKVCVYQGTAADVKRLPTMLPNLVVINSVAQYFPSQEYLVKVIEDVVQLGGVETLFFGDIRSYALNTQFQASRALRIAGEAASKDEIRRKMEDIKRADMELMVDPAFFTALAARFKFIHHVEILPKRMKAVNELSCYRYSAVVHLQHDSQLHVHEVESEWIDFQKNNLNRQSLLELLGQTSSTLAVSNIPFQNTIIERHVVEALDRGQGPDWITSALRNAEHCPSMSVAGLVELAHLACFQVEISCARQYSQRGGLDAIFHRQQPSRGDRVLFRFPTDHNRPSHLLTSRPLRLQLYQTVQEGLFERLQTQLPSYMVPHAITVVDELPINENGKVDRRALAARTQTRTAARASIRQPTTDMEREMQRIWSHVLHISLDSIGLDDSFFHLGGNSITAMRIVSEARKVGFKLSVADIFRHDVLEDLACHLSPEEEETDIVFVDRPPPVSVLEEITALGVSVDDVEDVLPLTSFQEKIVLDGETVGQHANYFYIDLEDLDVSKIQTSYWATLDKFSILRARFLHLEGKLWQVVFRQLRLPIHIEDVDDVNQAAHQFCVKDLHEMSSTDIPISITLLRHKDGVRLILRLSHAQYDGISFPIILQSLMDEYSGIERPAGPTFGRFLSYAAQQRTKAITYWTKVLTGSSLTVPEPILRPKAISGSPQRVYEEAEIDLPQLPSKTTPATLLSAAWALLLSHITGEDDVVFGHVVAGRNAAMSGIDEVVGTCLNIVPIRVNLPAAHTPRQLLLSVQEQFFFGEADLLGFKDIIEQCTDWPAGTTFDSMIQHQNIDEHPEIESAGAASQVQFFENSHLVPPSLFVVSYPRGRHLDVKLFGNTHILTKEMAKGLIDRLCKITEELGNLDCSLQVLRDRHGRLSEE.

The tract at residues 263–662 (FEQRSRAHPN…GRNDNQVKIR (400 aa)) is adenylation 1. A Carrier 1 domain is found at 789–865 (QPLSEVEKQV…NVAGQARRTT (77 aa)). Position 826 is an O-(pantetheine 4'-phosphoryl)serine (Ser826). The tract at residues 903–1171 (QDAFPCTSLQ…ITTVPVRIRL (269 aa)) is condensation 1. The segment at 1332–1740 (LETQAHSRPD…GRKDAQVKIR (409 aa)) is adenylation 2. The 77-residue stretch at 1865–1941 (QPRTKLERQL…NLAQATGTQG (77 aa)) folds into the Carrier 2 domain. Position 1902 is an O-(pantetheine 4'-phosphoryl)serine (Ser1902). The segment at 1965 to 2249 (PAQLSPIQRL…FSTIFPVRVS (285 aa)) is condensation 2. An adenylation 3 region spans residues 2863 to 3255 (LAQPHEPAIC…ARKDAQIKIR (393 aa)). In terms of domain architecture, Carrier 3 spans 3380 to 3456 (QPLSEAERKM…NVTHQAVAQL (77 aa)). At Ser3417 the chain carries O-(pantetheine 4'-phosphoryl)serine. Residues 3496–3761 (DAFPCTPLQE…FATLPLRVRL (266 aa)) form a condensation 3 region. The tract at residues 3924–4321 (DRVRIHPNAP…GRKDDQVKLR (398 aa)) is adenylation 4. Over residues 4439-4450 (ELAQARTAQQGP) the composition is skewed to polar residues. A disordered region spans residues 4439 to 4459 (ELAQARTAQQGPKRQPASEAE). One can recognise a Carrier 4 domain in the interval 4453-4529 (QPASEAERQM…EAATQAQMLG (77 aa)). An O-(pantetheine 4'-phosphoryl)serine modification is found at Ser4490. The tract at residues 4545-4837 (QSFAQARLWF…VNMQCLRVKI (293 aa)) is condensation 4. An adenylation 5 region spans residues 5006–5405 (FRQQVAACAD…RRMDAQVKIR (400 aa)). A Carrier 5 domain is found at 5933–6009 (QPTSKTQRQL…DMAEGLPLAK (77 aa)). Ser5970 is modified (O-(pantetheine 4'-phosphoryl)serine). The interval 6023–6315 (VEQSFAQRRL…VNMQCIRIRV (293 aa)) is condensation 5. Positions 6481–6766 (FRQQALLNPD…IINAYGPTEN (286 aa)) are adenylation 6. Residues 7394–7470 (QPTTDMEREM…DLACHLSPEE (77 aa)) form the Carrier 6 domain. Ser7431 bears the O-(pantetheine 4'-phosphoryl)serine mark. The tract at residues 7501-7771 (EDVLPLTSFQ…CLNIVPIRVN (271 aa)) is condensation 6.

It belongs to the NRP synthetase family.

It functions in the pathway secondary metabolite biosynthesis. Nonribosomal peptide synthetase; part of the gene cluster that mediates the biosynthesis of destruxins, insecticidal cyclic hexadepsipeptides which induce flaccid paralysis and visceral muscle contraction in insects through targeting the calcium channels and vacuolar-type ATPases. The aldo-keto reductase dtxS3 converts alpha-ketoisocaproic acid from deaminated leucine into alpha-hydroxyisocaproic acid (HIC), which is the first substrate for destruxin assembly by dtxS1. L-aspartate decarboxylase dtxS4 converts aspartic acid into beta-alanine, the last substrate for the destruxin assembly line performed by dtxS1. The nonribosomal peptide synthetase dtxS1 synthesizes destruxins B and B2, whereas the cytochrome P450 monooxygenase dtxS2 is required to convert destruxin B into other destruxin derivatives, including destructins C, D, A and E. Destruxin E-diol (ED) is further produced in a non-enzymatic manner from destruxin E. Destruxins play an important role in virulence and escape from insect host immune defenses. The chain is Nonribosomal peptide synthetase dtxS1 from Metarhizium robertsii (strain ARSEF 23 / ATCC MYA-3075) (Metarhizium anisopliae (strain ARSEF 23)).